Here is a 301-residue protein sequence, read N- to C-terminus: Ornithine carbamoyltransferase (301 aa).

Residues 53-56 (STRT), glutamine 80, arginine 104, and 131-134 (HPCQ) contribute to the carbamoyl phosphate site. L-ornithine is bound by residues asparagine 162, aspartate 221, and 225 to 226 (SI). Carbamoyl phosphate-binding positions include 260–261 (CL) and arginine 288.

This sequence belongs to the aspartate/ornithine carbamoyltransferase superfamily. OTCase family.

Its subcellular location is the cytoplasm. The enzyme catalyses carbamoyl phosphate + L-ornithine = L-citrulline + phosphate + H(+). The protein operates within amino-acid biosynthesis; L-arginine biosynthesis; L-arginine from L-ornithine and carbamoyl phosphate: step 1/3. Reversibly catalyzes the transfer of the carbamoyl group from carbamoyl phosphate (CP) to the N(epsilon) atom of ornithine (ORN) to produce L-citrulline. The chain is Ornithine carbamoyltransferase from Cenarchaeum symbiosum (strain A).